Here is a 444-residue protein sequence, read N- to C-terminus: Sprouty-related, EVH1 domain-containing protein 1 (444 aa).

Serine 2 carries the N-acetylserine modification. In terms of domain architecture, WH1 spans 6–123 (ATSDNDNSYA…RGIRRAIEDI (118 aa)). Positions 123-151 (ISQGCPESKNEAEGADDLQANEEDSSSSL) are disordered. The span at 135–147 (EGADDLQANEEDS) shows a compositional bias: acidic residues. An N6-methyllysine modification is found at lysine 224. The region spanning 233-285 (SIRHVSFQDEDEIVRINPRDILIRRYADYRHPDMWKNDLERDDADSSIQFSKP) is the KBD domain. 2 positions are modified to phosphoserine: serine 238 and serine 308. Residues 333–444 (SRCVYCQERF…CCGGKHKAAG (112 aa)) are required for interaction with TESK1. The region spanning 334-442 (RCVYCQERFN…CGCCGGKHKA (109 aa)) is the SPR domain.

Homodimer and heterodimer. Able to interact with SPRED2 to form heterodimers. Interacts (via C-terminus) with TAOK1/MARKK (via C-terminus); the interaction does not affect TAOK1 kinase activity. Interacts (via C-terminus) with TESK1 (via C-terminus); the interaction inhibits TESK1 kinase activity. Interacts with CAV1. Interacts with RAS. Interacts with palmitoyltransferase ZDHHC17/HIP14; the interaction leads to palmitoylation of SPRED1. In terms of processing, palmitoylated by ZDHHC17/HIP14. Phosphorylated on tyrosine. Post-translationally, ubiquitinated. Weakly expressed in embryonic cell line HEK293.

The protein localises to the cell membrane. Its subcellular location is the membrane. The protein resides in the caveola. It localises to the nucleus. Its function is as follows. Tyrosine kinase substrate that inhibits growth-factor-mediated activation of MAP kinase. Negatively regulates hematopoiesis of bone marrow. Inhibits fibroblast growth factor (FGF)-induced retinal lens fiber differentiation, probably by inhibiting FGF-mediated phosphorylation of ERK1/2. Attenuates actin stress fiber formation via inhibition of TESK1-mediated phosphorylation of cofilin. Inhibits TGFB-induced epithelial-to-mesenchymal transition in lens epithelial cells. This is Sprouty-related, EVH1 domain-containing protein 1 (SPRED1) from Homo sapiens (Human).